Here is a 349-residue protein sequence, read N- to C-terminus: tRNA pseudouridine synthase D (349 aa).

Phenylalanine 27 provides a ligand contact to substrate. Aspartate 80 acts as the Nucleophile in catalysis. Asparagine 129 lines the substrate pocket. Positions 155-303 (GVPNYFGAQR…VEAARRAMLL (149 aa)) constitute a TRUD domain. Phenylalanine 329 serves as a coordination point for substrate.

The protein belongs to the pseudouridine synthase TruD family.

It carries out the reaction uridine(13) in tRNA = pseudouridine(13) in tRNA. In terms of biological role, responsible for synthesis of pseudouridine from uracil-13 in transfer RNAs. The protein is tRNA pseudouridine synthase D of Escherichia coli (strain SE11).